A 94-amino-acid polypeptide reads, in one-letter code: Parvalbumin beta 4 (94 aa).

Alanine 1 bears the N-acetylalanine mark. EF-hand domains are found at residues 36 to 63 (FFAIIDQDHSGFIEEEELKLFLQTFSAG) and 67 to 94 (LSDAETKTFLAAGDVDGDGMIGVDEFAA). Aspartate 41, aspartate 43, serine 45, phenylalanine 47, glutamate 49, glutamate 52, aspartate 80, aspartate 82, aspartate 84, methionine 86, and glutamate 91 together coordinate Ca(2+).

The protein belongs to the parvalbumin family.

Functionally, in muscle, parvalbumin is thought to be involved in relaxation after contraction. It binds two calcium ions. The sequence is that of Parvalbumin beta 4 from Merluccius bilinearis (Silver hake).